We begin with the raw amino-acid sequence, 232 residues long: Phospholipase A2 hemilipin (232 aa).

An N-terminal signal peptide occupies residues methionine 1 to serine 18. The propeptide occupies histidine 19–arginine 105. Residues tryptophan 115, glycine 117, and glycine 119 each contribute to the Ca(2+) site. Cystine bridges form between cysteine 116–cysteine 137, cysteine 136–cysteine 175, cysteine 143–cysteine 168, cysteine 166–cysteine 206, and cysteine 211–cysteine 219. Asparagine 124 carries N-linked (GlcNAc...) asparagine glycosylation. The active site involves histidine 140. Aspartate 141 lines the Ca(2+) pocket. N-linked (GlcNAc...) asparagine glycosylation occurs at asparagine 157. The propeptide occupies lysine 214–alanine 217.

Belongs to the phospholipase A2 family. Group III subfamily. As to quaternary structure, heterodimer composed of a small subunit and a large subunit; disulfid-linked. Ca(2+) serves as cofactor. In terms of tissue distribution, expressed by the venom gland.

It is found in the secreted. The catalysed reaction is a 1,2-diacyl-sn-glycero-3-phosphocholine + H2O = a 1-acyl-sn-glycero-3-phosphocholine + a fatty acid + H(+). Functionally, scorpion venom phospholipase A2 (PLA2) that shows high hydrolytic activities towards lecithin and acts as an effective blocker of all angiogenesis key steps in vivo and in vitro. It has no effect on apoptosis and does not display hemolytic, inflammatory or neurotoxic effects. PLA2 catalyzes the calcium-dependent hydrolysis of the 2-acyl groups in 3-sn-phosphoglycerides. In Hemiscorpius lepturus (Scorpion), this protein is Phospholipase A2 hemilipin.